Consider the following 434-residue polypeptide: Probable glucuronosyltransferase Os02g0520750 (434 aa).

Topologically, residues 1–10 (MVGARAGRVP) are cytoplasmic. Residues 11–31 (AAAAAAAAVLIVAACVFSSLA) traverse the membrane as a helical; Signal-anchor for type II membrane protein segment. The Lumenal segment spans residues 32 to 434 (GAAAAAEVVG…GPVADLKPWK (403 aa)). Residues Asn160 and Asn421 are each glycosylated (N-linked (GlcNAc...) asparagine).

It belongs to the glycosyltransferase 47 family.

Its subcellular location is the golgi apparatus membrane. In terms of biological role, involved in the synthesis of glucuronoxylan hemicellulose in secondary cell walls. The sequence is that of Probable glucuronosyltransferase Os02g0520750 from Oryza sativa subsp. japonica (Rice).